A 958-amino-acid polypeptide reads, in one-letter code: Glycine dehydrogenase (decarboxylating) (958 aa).

Lys-703 is modified (N6-(pyridoxal phosphate)lysine).

It belongs to the GcvP family. As to quaternary structure, the glycine cleavage system is composed of four proteins: P, T, L and H. Pyridoxal 5'-phosphate is required as a cofactor.

It catalyses the reaction N(6)-[(R)-lipoyl]-L-lysyl-[glycine-cleavage complex H protein] + glycine + H(+) = N(6)-[(R)-S(8)-aminomethyldihydrolipoyl]-L-lysyl-[glycine-cleavage complex H protein] + CO2. Functionally, the glycine cleavage system catalyzes the degradation of glycine. The P protein binds the alpha-amino group of glycine through its pyridoxal phosphate cofactor; CO(2) is released and the remaining methylamine moiety is then transferred to the lipoamide cofactor of the H protein. The chain is Glycine dehydrogenase (decarboxylating) from Nitrobacter hamburgensis (strain DSM 10229 / NCIMB 13809 / X14).